Consider the following 220-residue polypeptide: Ribosomal RNA small subunit methyltransferase G 1 (220 aa).

3 residues coordinate S-adenosyl-L-methionine: G79, F84, and R150.

Belongs to the methyltransferase superfamily. RNA methyltransferase RsmG family.

The protein resides in the cytoplasm. It catalyses the reaction guanosine(527) in 16S rRNA + S-adenosyl-L-methionine = N(7)-methylguanosine(527) in 16S rRNA + S-adenosyl-L-homocysteine. In terms of biological role, specifically methylates the N7 position of guanine in position 527 of 16S rRNA. This is Ribosomal RNA small subunit methyltransferase G 1 from Syntrophobacter fumaroxidans (strain DSM 10017 / MPOB).